Reading from the N-terminus, the 338-residue chain is tRNA (cytidine(56)-2'-O)-methyltransferase (338 aa).

Residues Leu-79 and 105–109 (GSEKV) each bind S-adenosyl-L-methionine. Residues 188–295 (LINHVKSVKE…VAHADNLFAG (108 aa)) enclose the HD domain.

It belongs to the aTrm56 family. Homodimer.

It is found in the cytoplasm. It carries out the reaction cytidine(56) in tRNA + S-adenosyl-L-methionine = 2'-O-methylcytidine(56) in tRNA + S-adenosyl-L-homocysteine + H(+). Its function is as follows. Specifically catalyzes the AdoMet-dependent 2'-O-ribose methylation of cytidine at position 56 in tRNAs. The sequence is that of tRNA (cytidine(56)-2'-O)-methyltransferase from Thermoplasma volcanium (strain ATCC 51530 / DSM 4299 / JCM 9571 / NBRC 15438 / GSS1).